The sequence spans 441 residues: 3-phosphoshikimate 1-carboxyvinyltransferase (441 aa).

The 3-phosphoshikimate site is built by K22, S23, and R27. Residue K22 coordinates phosphoenolpyruvate. G95 and R123 together coordinate phosphoenolpyruvate. 3-phosphoshikimate contacts are provided by S168, Q170, D321, and K348. A phosphoenolpyruvate-binding site is contributed by Q170. D321 (proton acceptor) is an active-site residue. Positions 352 and 400 each coordinate phosphoenolpyruvate.

This sequence belongs to the EPSP synthase family. As to quaternary structure, monomer.

The protein localises to the cytoplasm. The catalysed reaction is 3-phosphoshikimate + phosphoenolpyruvate = 5-O-(1-carboxyvinyl)-3-phosphoshikimate + phosphate. It functions in the pathway metabolic intermediate biosynthesis; chorismate biosynthesis; chorismate from D-erythrose 4-phosphate and phosphoenolpyruvate: step 6/7. Catalyzes the transfer of the enolpyruvyl moiety of phosphoenolpyruvate (PEP) to the 5-hydroxyl of shikimate-3-phosphate (S3P) to produce enolpyruvyl shikimate-3-phosphate and inorganic phosphate. The polypeptide is 3-phosphoshikimate 1-carboxyvinyltransferase (Novosphingobium aromaticivorans (strain ATCC 700278 / DSM 12444 / CCUG 56034 / CIP 105152 / NBRC 16084 / F199)).